The following is a 45-amino-acid chain: Keratin-associated protein 22-2 (45 aa).

This sequence belongs to the KRTAP type 20 family. As to quaternary structure, interacts with hair keratins.

Its function is as follows. In the hair cortex, hair keratin intermediate filaments are embedded in an interfilamentous matrix, consisting of hair keratin-associated proteins (KRTAP), which are essential for the formation of a rigid and resistant hair shaft through their extensive disulfide bond cross-linking with abundant cysteine residues of hair keratins. The matrix proteins include the high-sulfur and high-glycine-tyrosine keratins. The sequence is that of Keratin-associated protein 22-2 (KRTAP22-2) from Homo sapiens (Human).